A 261-amino-acid chain; its full sequence is CD40 ligand (261 aa).

The Cytoplasmic portion of the chain corresponds to 1-22 (MIETYSQPSPRSVAAGPPVSMK). Residues 23–43 (IFMYLLTVFLITQMIGSALFA) traverse the membrane as a helical; Signal-anchor for type II membrane protein segment. Over 44–240 (AYLHRRLDKI…LQPGASVFVN (197 aa)) the chain is Extracellular. In terms of domain architecture, THD spans 122–261 (IAAHVISEAS…GFTSFGLLKL (140 aa)). A disulfide bridge connects residues Cys178 and Cys218. An N-linked (GlcNAc...) asparagine glycan is attached at Asn240.

The protein belongs to the tumor necrosis factor family. In terms of assembly, homotrimer. Interacts with CD28. CD40 ligand, soluble form: Exists as either a monomer or a homotrimer. Forms a ternary complex between CD40 and integrins for CD40-CD40LG signaling. In terms of processing, the soluble form derives from the membrane form by proteolytic processing.

It is found in the cell membrane. The protein localises to the cell surface. The protein resides in the secreted. Cytokine that acts as a ligand to CD40/TNFRSF5. Costimulates T-cell proliferation and cytokine production. Its cross-linking on T-cells generates a costimulatory signal which enhances the production of IL4 and IL10 in conjunction with the TCR/CD3 ligation and CD28 costimulation. Induces the activation of NF-kappa-B. Induces the activation of kinases MAPK8 and PAK2 in T-cells. Mediates B-cell proliferation in the absence of co-stimulus as well as IgE production in the presence of IL4. Involved in immunoglobulin class switching. In terms of biological role, acts as a ligand for integrins, specifically ITGA5:ITGB1 and ITGAV:ITGB3; both integrins and the CD40 receptor are required for activation of CD40-CD40LG signaling, which have cell-type dependent effects, such as B-cell activation, NF-kappa-B signaling and anti-apoptotic signaling. The protein is CD40 ligand (CD40LG) of Sus scrofa (Pig).